A 639-amino-acid polypeptide reads, in one-letter code: MAU2 chromatid cohesion factor homolog (639 aa).

2 TPR repeats span residues 453–486 (GGFY…ANAE) and 493–526 (SCSL…ASKI).

This sequence belongs to the SCC4/mau-2 family. As to quaternary structure, interacts with Nipped-B to form the cohesin loading complex.

The protein localises to the nucleus. Its subcellular location is the nucleoplasm. Required for association of the cohesin complex with chromatin during interphase. Plays a role in sister chromatid cohesion and normal progression through prometaphase. The chain is MAU2 chromatid cohesion factor homolog from Drosophila ananassae (Fruit fly).